The chain runs to 20 residues: VSAEYLERQGPKDDXDCFDD.

The segment at 1–20 (VSAEYLERQGPKDDXDCFDD) is disordered.

Possible 'checkpoint' protein for cell division in the blooming process. The protein is Blooming-related protein 2 of Prorocentrum triestinum (Red tide alga).